Reading from the N-terminus, the 704-residue chain is Elongation factor G (704 aa).

Positions 8–290 constitute a tr-type G domain; it reads EKYRNIGICA…GVVRYLPAPN (283 aa). GTP is bound by residues 17 to 24, 88 to 92, and 142 to 145; these read AHVDAGKT, DTPGH, and NKMD.

The protein belongs to the TRAFAC class translation factor GTPase superfamily. Classic translation factor GTPase family. EF-G/EF-2 subfamily.

The protein resides in the cytoplasm. Its function is as follows. Catalyzes the GTP-dependent ribosomal translocation step during translation elongation. During this step, the ribosome changes from the pre-translocational (PRE) to the post-translocational (POST) state as the newly formed A-site-bound peptidyl-tRNA and P-site-bound deacylated tRNA move to the P and E sites, respectively. Catalyzes the coordinated movement of the two tRNA molecules, the mRNA and conformational changes in the ribosome. This is Elongation factor G from Francisella tularensis subsp. mediasiatica (strain FSC147).